Reading from the N-terminus, the 476-residue chain is Adenosylhomocysteinase (476 aa).

Substrate contacts are provided by T62, D141, and E201. 202–204 is a binding site for NAD(+); it reads TTT. Residues K231 and D235 each contribute to the substrate site. NAD(+) contacts are provided by residues N236, 265 to 270, E288, N323, 344 to 346, and N389; these read GYGDVG and IGH.

The protein belongs to the adenosylhomocysteinase family. NAD(+) serves as cofactor.

The protein localises to the cytoplasm. The enzyme catalyses S-adenosyl-L-homocysteine + H2O = L-homocysteine + adenosine. Its pathway is amino-acid biosynthesis; L-homocysteine biosynthesis; L-homocysteine from S-adenosyl-L-homocysteine: step 1/1. Its function is as follows. May play a key role in the regulation of the intracellular concentration of adenosylhomocysteine. The sequence is that of Adenosylhomocysteinase from Myxococcus xanthus (strain DK1622).